We begin with the raw amino-acid sequence, 330 residues long: Inactive hydroxysteroid dehydrogenase-like protein 1 (330 aa).

Position 2 is an N-acetylalanine (Ala-2). Positions 2–82 are required for mitochondria translocation; the sequence is AAVDSFYLLY…SGATDGIGKA (81 aa). Residues 74 to 80, Asp-125, and Lys-222 contribute to the NADP(+) site; that span reads GATDGIG.

It belongs to the short-chain dehydrogenases/reductases (SDR) family. 17-beta-HSD 3 subfamily. Interacts with STYXL1.

It is found in the mitochondrion. The polypeptide is Inactive hydroxysteroid dehydrogenase-like protein 1 (Hsdl1) (Rattus norvegicus (Rat)).